The sequence spans 455 residues: Bifunctional protein GlmU (455 aa).

The segment at 1–226 (MSLDIVILAA…PMEVQGANDR (226 aa)) is pyrophosphorylase. UDP-N-acetyl-alpha-D-glucosamine contacts are provided by residues 8–11 (LAAG), lysine 22, glutamine 73, 78–79 (GT), 99–101 (YGD), glycine 136, glutamate 151, asparagine 166, and asparagine 224. Aspartate 101 is a binding site for Mg(2+). Mg(2+) is bound at residue asparagine 224. A linker region spans residues 227–247 (RQLSELERHYQLREGRRLMAQ). The segment at 248–455 (GVTLRDPARF…WKRPEKIKKS (208 aa)) is N-acetyltransferase. 2 residues coordinate UDP-N-acetyl-alpha-D-glucosamine: arginine 330 and lysine 348. The active-site Proton acceptor is histidine 360. UDP-N-acetyl-alpha-D-glucosamine is bound by residues tyrosine 363 and asparagine 374. Residues alanine 377, 383 to 384 (NY), serine 402, alanine 420, and arginine 437 each bind acetyl-CoA.

The protein in the N-terminal section; belongs to the N-acetylglucosamine-1-phosphate uridyltransferase family. It in the C-terminal section; belongs to the transferase hexapeptide repeat family. In terms of assembly, homotrimer. It depends on Mg(2+) as a cofactor.

The protein localises to the cytoplasm. It catalyses the reaction alpha-D-glucosamine 1-phosphate + acetyl-CoA = N-acetyl-alpha-D-glucosamine 1-phosphate + CoA + H(+). It carries out the reaction N-acetyl-alpha-D-glucosamine 1-phosphate + UTP + H(+) = UDP-N-acetyl-alpha-D-glucosamine + diphosphate. The protein operates within nucleotide-sugar biosynthesis; UDP-N-acetyl-alpha-D-glucosamine biosynthesis; N-acetyl-alpha-D-glucosamine 1-phosphate from alpha-D-glucosamine 6-phosphate (route II): step 2/2. Its pathway is nucleotide-sugar biosynthesis; UDP-N-acetyl-alpha-D-glucosamine biosynthesis; UDP-N-acetyl-alpha-D-glucosamine from N-acetyl-alpha-D-glucosamine 1-phosphate: step 1/1. It functions in the pathway bacterial outer membrane biogenesis; LPS lipid A biosynthesis. Catalyzes the last two sequential reactions in the de novo biosynthetic pathway for UDP-N-acetylglucosamine (UDP-GlcNAc). The C-terminal domain catalyzes the transfer of acetyl group from acetyl coenzyme A to glucosamine-1-phosphate (GlcN-1-P) to produce N-acetylglucosamine-1-phosphate (GlcNAc-1-P), which is converted into UDP-GlcNAc by the transfer of uridine 5-monophosphate (from uridine 5-triphosphate), a reaction catalyzed by the N-terminal domain. The chain is Bifunctional protein GlmU from Pseudomonas entomophila (strain L48).